The chain runs to 307 residues: Pyridoxal 5'-phosphate synthase subunit PdxS (307 aa).

Residues 1–10 (MRGQPRPKLR) are compositionally biased toward basic residues. The interval 1 to 20 (MRGQPRPKLRRMTEQQTGTP) is disordered. A D-ribose 5-phosphate-binding site is contributed by Asp-37. Catalysis depends on Lys-94, which acts as the Schiff-base intermediate with D-ribose 5-phosphate. Gly-166 contacts D-ribose 5-phosphate. A D-glyceraldehyde 3-phosphate-binding site is contributed by Arg-178. D-ribose 5-phosphate-binding positions include Gly-227 and 248–249 (GS).

Belongs to the PdxS/SNZ family. In terms of assembly, in the presence of PdxT, forms a dodecamer of heterodimers.

It carries out the reaction aldehydo-D-ribose 5-phosphate + D-glyceraldehyde 3-phosphate + L-glutamine = pyridoxal 5'-phosphate + L-glutamate + phosphate + 3 H2O + H(+). It participates in cofactor biosynthesis; pyridoxal 5'-phosphate biosynthesis. Functionally, catalyzes the formation of pyridoxal 5'-phosphate from ribose 5-phosphate (RBP), glyceraldehyde 3-phosphate (G3P) and ammonia. The ammonia is provided by the PdxT subunit. Can also use ribulose 5-phosphate and dihydroxyacetone phosphate as substrates, resulting from enzyme-catalyzed isomerization of RBP and G3P, respectively. The chain is Pyridoxal 5'-phosphate synthase subunit PdxS from Deinococcus radiodurans (strain ATCC 13939 / DSM 20539 / JCM 16871 / CCUG 27074 / LMG 4051 / NBRC 15346 / NCIMB 9279 / VKM B-1422 / R1).